The primary structure comprises 515 residues: Peroxisomal catalase A (515 aa).

At serine 2 the chain carries N-acetylserine. Active-site residues include histidine 70 and asparagine 143. Residue tyrosine 355 participates in heme binding. Positions serine 513–phenylalanine 515 match the Microbody targeting signal motif.

The protein belongs to the catalase family. As to quaternary structure, homotetramer. Heme is required as a cofactor.

Its subcellular location is the peroxisome matrix. It catalyses the reaction 2 H2O2 = O2 + 2 H2O. In terms of biological role, catalyzes the degradation of hydrogen peroxide (H(2)O(2)) generated by peroxisomal oxidases to water and oxygen, thereby protecting cells from the toxic effects of hydrogen peroxide. The chain is Peroxisomal catalase A (CTA1) from Saccharomyces cerevisiae (strain ATCC 204508 / S288c) (Baker's yeast).